Here is a 486-residue protein sequence, read N- to C-terminus: Transcription factor aptf-4 (486 aa).

2 disordered regions span residues 25 to 49 (CEPS…SAKM) and 150 to 173 (LSTT…NQEK). Residues 150 to 169 (LSTTSANFTPDWNTTTNGPC) are compositionally biased toward polar residues. Positions 301-430 (QRQRKVTCFS…IVEQAALYCE (130 aa)) are H-S-H (helix-span-helix), dimerization.

It belongs to the AP-2 family. Binds DNA as a dimer.

It is found in the nucleus. In terms of biological role, sequence-specific DNA-binding protein that interacts with enhancer elements to regulate transcription of selected genes. Required for neuroblast and epidermal morphogenesis, perhaps acting in cooperation with transcription factor aptf-2. The polypeptide is Transcription factor aptf-4 (Caenorhabditis elegans).